A 215-amino-acid polypeptide reads, in one-letter code: N-(5'-phosphoribosyl)anthranilate isomerase (215 aa).

The protein belongs to the TrpF family.

The enzyme catalyses N-(5-phospho-beta-D-ribosyl)anthranilate = 1-(2-carboxyphenylamino)-1-deoxy-D-ribulose 5-phosphate. Its pathway is amino-acid biosynthesis; L-tryptophan biosynthesis; L-tryptophan from chorismate: step 3/5. In Parvibaculum lavamentivorans (strain DS-1 / DSM 13023 / NCIMB 13966), this protein is N-(5'-phosphoribosyl)anthranilate isomerase.